We begin with the raw amino-acid sequence, 454 residues long: Apyrase (454 aa).

The Cytoplasmic portion of the chain corresponds to 1-7 (MLNQNSH). The chain crosses the membrane as a helical; Signal-anchor for type II membrane protein span at residues 8-28 (FIFIILAIFLVLPLSLLSKNV). At 29-454 (NAQIPLRRHL…TTNKIRVASS (426 aa)) the chain is on the extracellular side. Position 48 to 58 (48 to 58 (VIFDAGSTGSR)) interacts with ATP. N151 carries an N-linked (GlcNAc...) asparagine glycan. E170 functions as the Proton acceptor in the catalytic mechanism. 194-204 (ATIDLGGGSVQ) contacts ATP. An N-linked (GlcNAc...) asparagine glycan is attached at N262.

Belongs to the GDA1/CD39 NTPase family. Ca(2+) serves as cofactor. Post-translationally, the N-terminus is blocked.

The protein resides in the membrane. The enzyme catalyses a ribonucleoside 5'-triphosphate + 2 H2O = a ribonucleoside 5'-phosphate + 2 phosphate + 2 H(+). Catalyzes the hydrolysis of phosphoanhydride bonds of nucleoside tri- and di-phosphates. The chain is Apyrase (RROP1) from Solanum tuberosum (Potato).